The chain runs to 329 residues: MTQLFYDTDADLSLLNKKTIAIIGYGSQGHAHALNLKDSGMDVIVGLYKGSKSEGKAVSDGLKVFSVSEACEKADWIMILLPDEFQKDVYLKEIEPNLKEGKILSFAHGFNIRFGLIKPPSFVDVVMIAPKGPGHTVRWEYQNGQGVPALFAVEQDSSGNARSLAMAYAKGIGGTRAGILETNFKEETETDLFGEQAVLCGGLSELVKSGFETLVEAGYQPELAYFECLHEVKLIVDLMVKGGLSQMRDSISNTAEYGDYVSGKRLINSDTKKEMQKILKDIQDGTFAKNFVEECDKNKPLMTKLREENSKHEIEKVGKGLRSMFSWLK.

Residues 2 to 182 (TQLFYDTDAD…GGTRAGILET (181 aa)) form the KARI N-terminal Rossmann domain. NADP(+) contacts are provided by residues 25-28 (YGSQ), S51, S53, and 83-86 (DEFQ). H108 is an active-site residue. G134 is an NADP(+) binding site. In terms of domain architecture, KARI C-terminal knotted spans 183-328 (NFKEETETDL…KGLRSMFSWL (146 aa)). Residues D191, E195, E227, and E231 each contribute to the Mg(2+) site. A substrate-binding site is contributed by S252.

This sequence belongs to the ketol-acid reductoisomerase family. Mg(2+) serves as cofactor.

It carries out the reaction (2R)-2,3-dihydroxy-3-methylbutanoate + NADP(+) = (2S)-2-acetolactate + NADPH + H(+). It catalyses the reaction (2R,3R)-2,3-dihydroxy-3-methylpentanoate + NADP(+) = (S)-2-ethyl-2-hydroxy-3-oxobutanoate + NADPH + H(+). Its pathway is amino-acid biosynthesis; L-isoleucine biosynthesis; L-isoleucine from 2-oxobutanoate: step 2/4. It functions in the pathway amino-acid biosynthesis; L-valine biosynthesis; L-valine from pyruvate: step 2/4. Its function is as follows. Involved in the biosynthesis of branched-chain amino acids (BCAA). Catalyzes an alkyl-migration followed by a ketol-acid reduction of (S)-2-acetolactate (S2AL) to yield (R)-2,3-dihydroxy-isovalerate. In the isomerase reaction, S2AL is rearranged via a Mg-dependent methyl migration to produce 3-hydroxy-3-methyl-2-ketobutyrate (HMKB). In the reductase reaction, this 2-ketoacid undergoes a metal-dependent reduction by NADPH to yield (R)-2,3-dihydroxy-isovalerate. This chain is Ketol-acid reductoisomerase (NADP(+)), found in Prochlorococcus marinus (strain MIT 9312).